The primary structure comprises 1447 residues: Bud site selection protein 4 (1447 aa).

Residues 1–16 (MHDAESTVDSLLKEID) are compositionally biased toward basic and acidic residues. 2 disordered regions span residues 1 to 37 (MHDA…TPHN) and 57 to 76 (NTRS…KMST). Ser-10 is modified (phosphoserine). Polar residues-rich tracts occupy residues 22-32 (TKSNITQNGSE) and 59-76 (RSNA…KMST). Phosphoserine occurs at positions 78, 81, 91, 96, and 167. Positions 272 to 316 (NLPSKLLNTSNNSHSDSRSPTASVEDLNISTNLPGADSSQNNPVT) are disordered. The segment covering 277–316 (LLNTSNNSHSDSRSPTASVEDLNISTNLPGADSSQNNPVT) has biased composition (polar residues). Thr-365 carries the post-translational modification Phosphothreonine. Ser-367 is modified (phosphoserine). Residues 444 to 588 (HQESEHANEQ…VEENEESEHV (145 aa)) form a disordered region. Basic and acidic residues predominate over residues 475–494 (EFQRNSKDGEEYRIVQHEES). The span at 497-509 (GQRTKSSEENIIN) shows a compositional bias: polar residues. Position 511 is a phosphoserine (Ser-511). Residues 538 to 548 (SSSCEDQSVSE) are compositionally biased toward polar residues. Residues 549–580 (ARNKDSIEEKEVETKDENIETEKDESEYHKVE) are compositionally biased toward basic and acidic residues. Ser-616 is modified (phosphoserine). A compositionally biased stretch (polar residues) spans 649-664 (NSQFSQQSSITTASTV). Residues 649–672 (NSQFSQQSSITTASTVDSKKDNGS) are disordered. Residues 768-879 (EHENIPLSTH…SLWESSYELK (112 aa)) form an interaction with IQG1 region. Phosphoserine is present on residues Ser-805 and Ser-811. A PH domain is found at 1302 to 1413 (NIYKEGYLLQ…WYNKLQEVVE (112 aa)).

Belongs to the BUD4 family. Interacts with AXL1, IQG1 and SEC3. Post-translationally, phosphorylated by CDC28.

It localises to the bud neck. Required for establishment of the axial budding pattern in haploid cells. Cooperates with other bud site selection proteins to recognize a spatial landmark during mitosis and they subsequently become a landmark for downstream polarity establishment factors that coordinate axial budding and cytokinesis. Involved in the septin organization at the bud neck. The protein is Bud site selection protein 4 (BUD4) of Saccharomyces cerevisiae (strain YJM789) (Baker's yeast).